The sequence spans 441 residues: tRNA-2-methylthio-N(6)-dimethylallyladenosine synthase (441 aa).

Residues 3–119 (KKVSIRTFGC…LPGLIRNAFQ (117 aa)) form the MTTase N-terminal domain. Residues Cys12, Cys48, Cys82, Cys155, Cys159, and Cys162 each coordinate [4Fe-4S] cluster. One can recognise a Radical SAM core domain in the interval 141–371 (RSGSISAFIP…IDLQSGISGE (231 aa)). A TRAM domain is found at 374-437 (GNDVGSVQEV…QATLIGRCQD (64 aa)).

It belongs to the methylthiotransferase family. MiaB subfamily. In terms of assembly, monomer. [4Fe-4S] cluster serves as cofactor.

The protein resides in the cytoplasm. It carries out the reaction N(6)-dimethylallyladenosine(37) in tRNA + (sulfur carrier)-SH + AH2 + 2 S-adenosyl-L-methionine = 2-methylsulfanyl-N(6)-dimethylallyladenosine(37) in tRNA + (sulfur carrier)-H + 5'-deoxyadenosine + L-methionine + A + S-adenosyl-L-homocysteine + 2 H(+). Its function is as follows. Catalyzes the methylthiolation of N6-(dimethylallyl)adenosine (i(6)A), leading to the formation of 2-methylthio-N6-(dimethylallyl)adenosine (ms(2)i(6)A) at position 37 in tRNAs that read codons beginning with uridine. In Prosthecochloris aestuarii (strain DSM 271 / SK 413), this protein is tRNA-2-methylthio-N(6)-dimethylallyladenosine synthase.